The sequence spans 65 residues: Large ribosomal subunit protein uL29 (65 aa).

It belongs to the universal ribosomal protein uL29 family.

The sequence is that of Large ribosomal subunit protein uL29 from Lactobacillus delbrueckii subsp. bulgaricus (strain ATCC 11842 / DSM 20081 / BCRC 10696 / JCM 1002 / NBRC 13953 / NCIMB 11778 / NCTC 12712 / WDCM 00102 / Lb 14).